We begin with the raw amino-acid sequence, 704 residues long: Elongation factor G (704 aa).

The tr-type G domain maps to 10–290 (NKVRNIGIMA…AVVDFLPNPL (281 aa)). GTP-binding positions include 19–26 (AHIDAGKT), 83–87 (DTPGH), and 137–140 (NKMD).

Belongs to the TRAFAC class translation factor GTPase superfamily. Classic translation factor GTPase family. EF-G/EF-2 subfamily.

Its subcellular location is the cytoplasm. Functionally, catalyzes the GTP-dependent ribosomal translocation step during translation elongation. During this step, the ribosome changes from the pre-translocational (PRE) to the post-translocational (POST) state as the newly formed A-site-bound peptidyl-tRNA and P-site-bound deacylated tRNA move to the P and E sites, respectively. Catalyzes the coordinated movement of the two tRNA molecules, the mRNA and conformational changes in the ribosome. This is Elongation factor G from Paenarthrobacter aurescens (strain TC1).